The chain runs to 501 residues: Glutamyl-tRNA(Gln) amidotransferase subunit A (501 aa).

Residues lysine 80 and serine 155 each act as charge relay system in the active site. The active-site Acyl-ester intermediate is the serine 179.

This sequence belongs to the amidase family. GatA subfamily. In terms of assembly, heterotrimer of A, B and C subunits.

The enzyme catalyses L-glutamyl-tRNA(Gln) + L-glutamine + ATP + H2O = L-glutaminyl-tRNA(Gln) + L-glutamate + ADP + phosphate + H(+). Its function is as follows. Allows the formation of correctly charged Gln-tRNA(Gln) through the transamidation of misacylated Glu-tRNA(Gln) in organisms which lack glutaminyl-tRNA synthetase. The reaction takes place in the presence of glutamine and ATP through an activated gamma-phospho-Glu-tRNA(Gln). The chain is Glutamyl-tRNA(Gln) amidotransferase subunit A from Cutibacterium acnes (strain DSM 16379 / KPA171202) (Propionibacterium acnes).